A 161-amino-acid chain; its full sequence is ATP synthase subunit b (161 aa).

A helical transmembrane segment spans residues 10–29 (AVVQLLNFLFLLWILNKLLY).

The protein belongs to the ATPase B chain family. F-type ATPases have 2 components, F(1) - the catalytic core - and F(0) - the membrane proton channel. F(1) has five subunits: alpha(3), beta(3), gamma(1), delta(1), epsilon(1). F(0) has three main subunits: a(1), b(2) and c(10-14). The alpha and beta chains form an alternating ring which encloses part of the gamma chain. F(1) is attached to F(0) by a central stalk formed by the gamma and epsilon chains, while a peripheral stalk is formed by the delta and b chains.

The protein localises to the cell inner membrane. F(1)F(0) ATP synthase produces ATP from ADP in the presence of a proton or sodium gradient. F-type ATPases consist of two structural domains, F(1) containing the extramembraneous catalytic core and F(0) containing the membrane proton channel, linked together by a central stalk and a peripheral stalk. During catalysis, ATP synthesis in the catalytic domain of F(1) is coupled via a rotary mechanism of the central stalk subunits to proton translocation. In terms of biological role, component of the F(0) channel, it forms part of the peripheral stalk, linking F(1) to F(0). In Fervidobacterium nodosum (strain ATCC 35602 / DSM 5306 / Rt17-B1), this protein is ATP synthase subunit b.